The chain runs to 429 residues: Histidine--tRNA ligase (429 aa).

Belongs to the class-II aminoacyl-tRNA synthetase family. In terms of assembly, homodimer.

The protein localises to the cytoplasm. It catalyses the reaction tRNA(His) + L-histidine + ATP = L-histidyl-tRNA(His) + AMP + diphosphate + H(+). The polypeptide is Histidine--tRNA ligase (Escherichia fergusonii (strain ATCC 35469 / DSM 13698 / CCUG 18766 / IAM 14443 / JCM 21226 / LMG 7866 / NBRC 102419 / NCTC 12128 / CDC 0568-73)).